We begin with the raw amino-acid sequence, 154 residues long: Probable deoxyuridine 5'-triphosphate nucleotidohydrolase (154 aa).

It belongs to the dCTP deaminase family. Archaeal dUTPase subfamily.

The enzyme catalyses dUTP + H2O = dUMP + diphosphate + H(+). Its pathway is pyrimidine metabolism; dUMP biosynthesis; dUMP from dCTP (dUTP route): step 2/2. Its function is as follows. This enzyme is involved in nucleotide metabolism: it produces dUMP, the immediate precursor of thymidine nucleotides and it decreases the intracellular concentration of dUTP so that uracil cannot be incorporated into DNA. The protein is Probable deoxyuridine 5'-triphosphate nucleotidohydrolase of Methanopyrus kandleri (strain AV19 / DSM 6324 / JCM 9639 / NBRC 100938).